Here is a 309-residue protein sequence, read N- to C-terminus: tRNA pseudouridine synthase B (309 aa).

D39 acts as the Nucleophile in catalysis. The PUA domain occupies 229–306 (LPRVVVHQES…ERVLTLRKVF (78 aa)).

The protein belongs to the pseudouridine synthase TruB family. Type 1 subfamily.

The catalysed reaction is uridine(55) in tRNA = pseudouridine(55) in tRNA. Responsible for synthesis of pseudouridine from uracil-55 in the psi GC loop of transfer RNAs. This is tRNA pseudouridine synthase B from Thermotoga petrophila (strain ATCC BAA-488 / DSM 13995 / JCM 10881 / RKU-1).